The sequence spans 363 residues: 3-dehydroquinate synthase (363 aa).

Residues D74 to K79, G108 to D112, T132 to T133, K145, K154, and C172 to T175 contribute to the NAD(+) site. Zn(2+) is bound by residues E187, H250, and H267.

Belongs to the sugar phosphate cyclases superfamily. Dehydroquinate synthase family. Requires NAD(+) as cofactor. Co(2+) is required as a cofactor. It depends on Zn(2+) as a cofactor.

The protein resides in the cytoplasm. The enzyme catalyses 7-phospho-2-dehydro-3-deoxy-D-arabino-heptonate = 3-dehydroquinate + phosphate. The protein operates within metabolic intermediate biosynthesis; chorismate biosynthesis; chorismate from D-erythrose 4-phosphate and phosphoenolpyruvate: step 2/7. In terms of biological role, catalyzes the conversion of 3-deoxy-D-arabino-heptulosonate 7-phosphate (DAHP) to dehydroquinate (DHQ). The sequence is that of 3-dehydroquinate synthase from Buchnera aphidicola subsp. Acyrthosiphon pisum (strain APS) (Acyrthosiphon pisum symbiotic bacterium).